The following is a 550-amino-acid chain: Hydroxylamine reductase (550 aa).

Cys-7, Cys-10, Cys-19, and Cys-25 together coordinate [4Fe-4S] cluster. The hybrid [4Fe-2O-2S] cluster site is built by His-244, Glu-268, Cys-312, Cys-405, Cys-433, Cys-458, Glu-493, and Lys-495. Cysteine persulfide is present on Cys-405.

It belongs to the HCP family. Requires [4Fe-4S] cluster as cofactor. Hybrid [4Fe-2O-2S] cluster is required as a cofactor.

It is found in the cytoplasm. The enzyme catalyses A + NH4(+) + H2O = hydroxylamine + AH2 + H(+). Functionally, catalyzes the reduction of hydroxylamine to form NH(3) and H(2)O. The chain is Hydroxylamine reductase from Porphyromonas gingivalis (strain ATCC 33277 / DSM 20709 / CIP 103683 / JCM 12257 / NCTC 11834 / 2561).